The primary structure comprises 280 residues: Manganese import system permease protein ScaB (280 aa).

A run of 8 helical transmembrane segments spans residues 18–38 (ALIT…FIIL), 61–81 (ILGI…SILI), 94–114 (TAIG…IGVA), 139–159 (TIGV…PLLL), 174–194 (VKIY…TAMQ), 196–216 (VGTI…YLYA), 222–242 (MMLL…FIGY), and 246–266 (IAVG…SFFI).

This sequence belongs to the ABC-3 integral membrane protein family.

The protein resides in the cell membrane. Its function is as follows. Part of an ABC transporter complex involved in manganese import. The sequence is that of Manganese import system permease protein ScaB from Streptococcus parasanguinis.